The following is a 126-amino-acid chain: Aspartate 1-decarboxylase (126 aa).

S25 functions as the Schiff-base intermediate with substrate; via pyruvic acid in the catalytic mechanism. Residue S25 is modified to Pyruvic acid (Ser). T57 contributes to the substrate binding site. Residue Y58 is the Proton donor of the active site. Residue G73–A75 participates in substrate binding.

It belongs to the PanD family. In terms of assembly, heterooctamer of four alpha and four beta subunits. The cofactor is pyruvate. In terms of processing, is synthesized initially as an inactive proenzyme, which is activated by self-cleavage at a specific serine bond to produce a beta-subunit with a hydroxyl group at its C-terminus and an alpha-subunit with a pyruvoyl group at its N-terminus.

Its subcellular location is the cytoplasm. It carries out the reaction L-aspartate + H(+) = beta-alanine + CO2. Its pathway is cofactor biosynthesis; (R)-pantothenate biosynthesis; beta-alanine from L-aspartate: step 1/1. Functionally, catalyzes the pyruvoyl-dependent decarboxylation of aspartate to produce beta-alanine. This chain is Aspartate 1-decarboxylase, found in Cellvibrio japonicus (strain Ueda107) (Pseudomonas fluorescens subsp. cellulosa).